The primary structure comprises 204 residues: DNA polymerase epsilon subunit D (204 aa).

The span at 165–177 (KEVQRRRAEKTPA) shows a compositional bias: basic and acidic residues. The interval 165–204 (KEVQRRRAEKTPAADEGQAEEGDAADEEEGSHKRAKLDEH) is disordered. The segment covering 181–193 (GQAEEGDAADEEE) has biased composition (acidic residues). Residues 194 to 204 (GSHKRAKLDEH) show a composition bias toward basic and acidic residues.

Heterotetramer. Consists of four subunits: POL2, DPB2, DPB3 and DPB4.

Its subcellular location is the nucleus. Its function is as follows. As accessory component of the DNA polymerase epsilon (DNA polymerase II) participates in chromosomal DNA replication. The sequence is that of DNA polymerase epsilon subunit D (DPB4) from Eremothecium gossypii (strain ATCC 10895 / CBS 109.51 / FGSC 9923 / NRRL Y-1056) (Yeast).